Reading from the N-terminus, the 333-residue chain is Acetoin:2,6-dichlorophenolindophenol oxidoreductase subunit alpha (333 aa).

As to quaternary structure, tetramer of 2 alpha and 2 beta subunits. Thiamine diphosphate serves as cofactor.

Its pathway is ketone degradation; acetoin degradation. Its function is as follows. Catalyzes the 2,6-dichlorophenolindophenol-dependent cleavage of acetoin into acetate and acetaldehyde. The alpha subunit is probably the catalytic subunit of the enzyme. This is Acetoin:2,6-dichlorophenolindophenol oxidoreductase subunit alpha (acoA) from Bacillus subtilis (strain 168).